The primary structure comprises 976 residues: Vacuolar membrane protease (976 aa).

Residues 1–15 lie on the Cytoplasmic side of the membrane; that stretch reads MKLKSVFRSVLKYRK. Residues 16 to 36 form a helical membrane-spanning segment; that stretch reads TNLSLLLLITYSIITLLYIFD. Residues 37-359 are Vacuolar-facing; it reads HERYKLNLPK…KFFVISAKTL (323 aa). N-linked (GlcNAc...) asparagine glycosylation is found at Asn96 and Asn121. The Zn(2+) site is built by His156 and Asp168. N-linked (GlcNAc...) asparagine glycosylation is present at Asn189. The Proton acceptor role is filled by Glu200. Glu201 is a Zn(2+) binding site. Residues Asn212 and Asn217 are each glycosylated (N-linked (GlcNAc...) asparagine). Zn(2+)-binding residues include Glu226 and His300. A helical membrane pass occupies residues 360–380; it reads FYWNCIFLLVSPVVAIGLYLI. Residues 381 to 392 are Cytoplasmic-facing; it reads SRDRMTWKSHSW. A helical transmembrane segment spans residues 393-412; the sequence is LSWTRFPLSLAAGIIVQKLF. The Vacuolar segment spans residues 413-428; sequence SNDIIRSNPLTFSRNY. A helical transmembrane segment spans residues 429 to 449; the sequence is FWPISAFFTQVIFTSYVLINC. Over 450 to 461 the chain is Cytoplasmic; that stretch reads SNFFFPCADMKS. Residues 462-482 form a helical membrane-spanning segment; sequence LSIIELFIILWTILLFTSKLL. The Vacuolar segment spans residues 483–496; sequence YSSDYRYTGLYPLS. Residues 497 to 517 form a helical membrane-spanning segment; sequence IFFLLSTIAAILRLLALALGM. Residues 518–627 are Cytoplasmic-facing; the sequence is RTRKRLGREC…NSLKLEYTDY (110 aa). Residues 528 to 610 form a disordered region; that stretch reads RDHHSNYSSH…PLLKGSNSME (83 aa). Residues 549 to 558 show a composition bias toward polar residues; sequence NLEQPQDQFT. The span at 559 to 570 shows a compositional bias: low complexity; it reads SSQDDQASIQDD. A compositionally biased stretch (basic and acidic residues) spans 582-601; it reads NVDEDHGMDSSSQQHDERVP. Residues 628 to 648 traverse the membrane as a helical segment; that stretch reads AWIIQFLLIVPIPSFILFNSV. Residues 649 to 668 lie on the Vacuolar side of the membrane; it reads DVIMDALNHTVQEGSKATFD. N-linked (GlcNAc...) asparagine glycosylation is present at Asn656. Residues 669–689 form a helical membrane-spanning segment; it reads VLRFGMVGSILIALPILPFFY. Residues 690-692 are Cytoplasmic-facing; the sequence is KVN. Residues 693 to 713 traverse the membrane as a helical segment; that stretch reads YITISLTALLFLISASKTLLV. The Vacuolar portion of the chain corresponds to 714–976; the sequence is HPFTNSNPLK…LVIVKDAIIL (263 aa). Asn768, Asn796, Asn811, Asn866, and Asn937 each carry an N-linked (GlcNAc...) asparagine glycan.

This sequence belongs to the peptidase M28 family. The cofactor is Zn(2+).

The protein localises to the vacuole membrane. Its function is as follows. May be involved in vacuolar sorting and osmoregulation. In Saccharomyces cerevisiae (strain JAY291) (Baker's yeast), this protein is Vacuolar membrane protease.